Consider the following 712-residue polypeptide: Polyphosphate kinase (712 aa).

Residue Asn49 participates in ATP binding. Residues Arg398 and Arg428 each contribute to the Mg(2+) site. Residue His458 is the Phosphohistidine intermediate of the active site. Positions 491, 587, and 615 each coordinate ATP.

It belongs to the polyphosphate kinase 1 (PPK1) family. The cofactor is Mg(2+). Post-translationally, an intermediate of this reaction is the autophosphorylated ppk in which a phosphate is covalently linked to a histidine residue through a N-P bond.

It carries out the reaction [phosphate](n) + ATP = [phosphate](n+1) + ADP. Its function is as follows. Catalyzes the reversible transfer of the terminal phosphate of ATP to form a long-chain polyphosphate (polyP). This chain is Polyphosphate kinase, found in Prochlorococcus marinus (strain MIT 9313).